The following is a 78-amino-acid chain: MDILKKSLFLVLFLGLVSLSICEEEKRENEDEEKQDDEQSEMKRAMWKDVLKKIGTVALHAGKAALGAVADTISQGEQ.

An N-terminal signal peptide occupies residues 1 to 22; the sequence is MDILKKSLFLVLFLGLVSLSIC. A propeptide spanning residues 23-42 is cleaved from the precursor; the sequence is EEEKRENEDEEKQDDEQSEM. Position 75 is a glutamine amide (Q75). A propeptide spanning residues 76–78 is cleaved from the precursor; it reads GEQ.

The protein belongs to the frog skin active peptide (FSAP) family. Dermaseptin subfamily. As to expression, expressed by the skin glands.

The protein resides in the secreted. Its function is as follows. Possesses a potent antimicrobial activity against bacteria, fungi and protozoa. Probably acts by disturbing membrane functions with its amphipathic structure. This Phyllomedusa bicolor (Two-colored leaf frog) protein is Dermaseptin-B1.